A 341-amino-acid chain; its full sequence is 4-hydroxy-2-oxovalerate aldolase (341 aa).

Residues 9–259 enclose the Pyruvate carboxyltransferase domain; that stretch reads VRITEVCLRD…KLDIDLYKMM (251 aa). 17–18 contributes to the substrate binding site; it reads RD. Position 18 (Asp-18) interacts with Mn(2+). His-21 acts as the Proton acceptor in catalysis. Ser-171 and His-198 together coordinate substrate. 2 residues coordinate Mn(2+): His-198 and His-200. Tyr-289 contributes to the substrate binding site.

It belongs to the 4-hydroxy-2-oxovalerate aldolase family.

It carries out the reaction (S)-4-hydroxy-2-oxopentanoate = acetaldehyde + pyruvate. The polypeptide is 4-hydroxy-2-oxovalerate aldolase (Bacillus thuringiensis (strain Al Hakam)).